An 89-amino-acid chain; its full sequence is Large ribosomal subunit protein bL27 (89 aa).

A disordered region spans residues 1-20 (MAHKKAGGSSRNGRDSAGRR).

Belongs to the bacterial ribosomal protein bL27 family.

This is Large ribosomal subunit protein bL27 from Zymomonas mobilis subsp. mobilis (strain ATCC 31821 / ZM4 / CP4).